The following is a 308-amino-acid chain: Elongation factor Ts (308 aa).

An involved in Mg(2+) ion dislocation from EF-Tu region spans residues 80-83; the sequence is TDFV.

It belongs to the EF-Ts family.

The protein localises to the cytoplasm. In terms of biological role, associates with the EF-Tu.GDP complex and induces the exchange of GDP to GTP. It remains bound to the aminoacyl-tRNA.EF-Tu.GTP complex up to the GTP hydrolysis stage on the ribosome. The chain is Elongation factor Ts from Allorhizobium ampelinum (strain ATCC BAA-846 / DSM 112012 / S4) (Agrobacterium vitis (strain S4)).